We begin with the raw amino-acid sequence, 427 residues long: MTWFIDRRLNGKNKSMVNRQRFLRRYKAQIKQSISEAINKRSVTDVDSGESVSIPTEDISEPMFHQGRGGLRHRVHPGNDHFVQNDRIERSQGGGGGSGSGQGQASQDGEGQDEFVFQISKDEYLDLLFEDLALPNLKQNQQRQLTEYKTHRAGYTANGVPANISVVRSLQNSLARRTAMTAGKRRELHALEENLAIISNSEPAQLLEEERLRKEIAELRAKIERVPFIDTFDLRYKNYEKRPDPSSQAVMFCLMDVSGSMDQSTKDMAKRFYILLYLFLSRTYKNVEVVYIRHHTQAKEVDEHEFFYSQETGGTIVSSALKLMDEVVKERYNPAQWNIYAAQASDGDNWADDSPLCHEILAKKLLPVVRYYSYIEITRRAHQTLWREYEHLQSTFDNFAMQHIRDQDDIYPVFRELFHKQNATAKD.

Residues 87–110 (RIERSQGGGGGSGSGQGQASQDGE) are disordered. Over residues 92-102 (QGGGGGSGSGQ) the composition is skewed to gly residues.

Belongs to the UPF0229 family.

The protein is UPF0229 protein YeaH of Escherichia coli O6:K15:H31 (strain 536 / UPEC).